Reading from the N-terminus, the 583-residue chain is Phosphoglucomutase, cytoplasmic (583 aa).

The segment at 1–20 is disordered; it reads MANFKVSRVETTPFEGQKPG. Alpha-D-glucose 1,6-bisphosphate contacts are provided by arginine 25 and serine 124. Serine 124 functions as the Phosphoserine intermediate in the catalytic mechanism. Serine 124, aspartate 300, aspartate 302, and aspartate 304 together coordinate Mg(2+). Residue serine 124 is modified to Phosphoserine. Alpha-D-glucose 1,6-bisphosphate is bound by residues aspartate 304, arginine 305, threonine 368, glutamate 387, serine 389, and lysine 400.

Belongs to the phosphohexose mutase family. Monomer. Mg(2+) is required as a cofactor.

The protein localises to the cytoplasm. The catalysed reaction is alpha-D-glucose 1-phosphate = alpha-D-glucose 6-phosphate. It catalyses the reaction O-phospho-L-seryl-[protein] + alpha-D-glucose 1-phosphate = alpha-D-glucose 1,6-bisphosphate + L-seryl-[protein]. The enzyme catalyses alpha-D-glucose 1,6-bisphosphate + L-seryl-[protein] = O-phospho-L-seryl-[protein] + alpha-D-glucose 6-phosphate. Functionally, catalyzes the reversible isomerization of alpha-D-glucose 1-phosphate to alpha-D-glucose 6-phosphate. The mechanism proceeds via the intermediate compound alpha-D-glucose 1,6-bisphosphate. This enzyme participates in both the breakdown and synthesis of glucose. The protein is Phosphoglucomutase, cytoplasmic (PGM1) of Solanum tuberosum (Potato).